The chain runs to 447 residues: Probable ribosomal RNA small subunit methyltransferase B (447 aa).

S-adenosyl-L-methionine-binding positions include 259–265 (CAAPGGK), aspartate 283, aspartate 310, and aspartate 329. Cysteine 382 functions as the Nucleophile in the catalytic mechanism.

Belongs to the class I-like SAM-binding methyltransferase superfamily. RsmB/NOP family.

The protein localises to the cytoplasm. The enzyme catalyses cytidine(967) in 16S rRNA + S-adenosyl-L-methionine = 5-methylcytidine(967) in 16S rRNA + S-adenosyl-L-homocysteine + H(+). Functionally, specifically methylates the cytosine at position 967 (m5C967) of 16S rRNA. The chain is Probable ribosomal RNA small subunit methyltransferase B from Bacillus subtilis (strain 168).